The following is an 846-amino-acid chain: Disks large-associated protein 5 (846 aa).

Ser-67 carries the post-translational modification Phosphoserine; by CDK1. A coiled-coil region spans residues 90–120 (RKQMLQKYKEEKQLQKLKEQREKAKRGIFKV). A disordered region spans residues 153-284 (TRSKAKDQME…TNATSGMNPD (132 aa)). Composition is skewed to basic and acidic residues over residues 156–174 (KAKD…DVRA) and 182–194 (TSEK…EKKV). A Phosphoserine modification is found at Ser-202. The span at 203 to 225 (LRMTRSATQAAKQVPRTVSSTTA) shows a compositional bias: polar residues. Residues 250–266 (KNVETKPDKGISCKVDS) are compositionally biased toward basic and acidic residues. The span at 269–281 (NTLNSQTNATSGM) shows a compositional bias: polar residues. A Phosphothreonine modification is found at Thr-326. Thr-329 carries the post-translational modification Phosphothreonine; by CDK1. Position 338 is a phosphothreonine (Thr-338). Lys-347 is covalently cross-linked (Glycyl lysine isopeptide (Lys-Gly) (interchain with G-Cter in SUMO2)). A phosphothreonine; by CDK1 mark is found at Thr-401 and Thr-402. Residue Ser-618 is modified to Phosphoserine; by CDK1. Residue Ser-627 is modified to Phosphoserine; by AURKA. Residues 628 to 671 (VSSEGPSQRLGTPKSVNKAVSQSRNEMGIPQQTTSPENAGPQNT) show a composition bias toward polar residues. The interval 628-674 (VSSEGPSQRLGTPKSVNKAVSQSRNEMGIPQQTTSPENAGPQNTKSE) is disordered. Ser-629 and Ser-634 each carry phosphoserine. Phosphothreonine; by CDK1 is present on Thr-639. Ser-642 carries the phosphoserine; by CDK1 modification. A Phosphoserine modification is found at Ser-662. Phosphoserine; by AURKA occurs at positions 725 and 757. Thr-759 bears the Phosphothreonine; by CDK1 mark. Phosphoserine is present on residues Ser-774 and Ser-777. Thr-784 carries the post-translational modification Phosphothreonine. Phosphoserine occurs at positions 806 and 812. Residue Ser-830 is modified to Phosphoserine; by AURKA. Ser-839 is subject to Phosphoserine; by CDK1.

The protein belongs to the SAPAP family. As to quaternary structure, interacts with CDK1. Interacts with the C-terminal proline-rich region of FBXO7. Recruited by FBXO7 to a SCF (SKP1-CUL1-F-box) protein complex in a CDK1/Cyclin B-phosphorylation dependent manner. Interacts with CDH1. In terms of processing, ubiquitinated, leading to its degradation. Post-translationally, decreased phosphorylation levels are associated with the differentiation of intestinal epithelial cells. Abundantly expressed in fetal liver. Expressed at lower levels in bone marrow, testis, colon, and placenta.

Its subcellular location is the nucleus. The protein localises to the cytoplasm. It localises to the cytoskeleton. The protein resides in the spindle. In terms of biological role, potential cell cycle regulator that may play a role in carcinogenesis of cancer cells. Mitotic phosphoprotein regulated by the ubiquitin-proteasome pathway. Key regulator of adherens junction integrity and differentiation that may be involved in CDH1-mediated adhesion and signaling in epithelial cells. This Homo sapiens (Human) protein is Disks large-associated protein 5 (DLGAP5).